The chain runs to 398 residues: uncharacterized protein (398 aa).

A signal peptide spans 1 to 21; that stretch reads MRKVGITLSVVALVIMGFVAG. At C22 the chain carries N-acetylcysteine. The S-archaeol cysteine moiety is linked to residue C22.

Belongs to the BMP lipoprotein family.

It is found in the cell membrane. This is an uncharacterized protein from Pyrococcus furiosus (strain ATCC 43587 / DSM 3638 / JCM 8422 / Vc1).